The sequence spans 125 residues: Secreted RxLR effector protein 55 (125 aa).

Positions 1–21 (MAASRSSITTLLLLIVAVALG) are cleaved as a signal peptide. A RxLR motif is present at residues 35 to 38 (RQLR). Low complexity predominate over residues 51–87 (ESATSSSSSSALDHKSSAPGEATNASETEHSAASTAS). The interval 51 to 96 (ESATSSSSSSALDHKSSAPGEATNASETEHSAASTASEPKHEGPTM) is disordered. N-linked (GlcNAc...) asparagine glycosylation occurs at Asn-74. A helical membrane pass occupies residues 99-119 (FVGPAAAGVLAILLIGAVIAF).

This sequence belongs to the RxLR effector family.

It localises to the secreted. Its subcellular location is the host cell membrane. Effector that acts as a broad suppressor of cell death to interrupt plant immunity. Inhibits cell death induced by cell death-inducing proteins, including the PAMP elicitor INF1 from P.infestans. In Plasmopara viticola (Downy mildew of grapevine), this protein is Secreted RxLR effector protein 55.